The primary structure comprises 206 residues: Probable thymidylate kinase (206 aa).

Gly-10–Ser-17 is a binding site for ATP.

Belongs to the thymidylate kinase family.

The catalysed reaction is dTMP + ATP = dTDP + ADP. The protein is Probable thymidylate kinase of Methanosarcina mazei (strain ATCC BAA-159 / DSM 3647 / Goe1 / Go1 / JCM 11833 / OCM 88) (Methanosarcina frisia).